Reading from the N-terminus, the 188-residue chain is dCTP deaminase (188 aa).

DCTP is bound by residues 111–116, 135–137, glutamine 156, tyrosine 170, and glutamine 180; these read KSTYAR and TLE. The active-site Proton donor/acceptor is glutamate 137.

Belongs to the dCTP deaminase family. In terms of assembly, homotrimer.

The catalysed reaction is dCTP + H2O + H(+) = dUTP + NH4(+). It participates in pyrimidine metabolism; dUMP biosynthesis; dUMP from dCTP (dUTP route): step 1/2. In terms of biological role, catalyzes the deamination of dCTP to dUTP. The chain is dCTP deaminase from Pseudomonas putida (strain ATCC 700007 / DSM 6899 / JCM 31910 / BCRC 17059 / LMG 24140 / F1).